Consider the following 122-residue polypeptide: Pollen allergen Phl p 2 (122 aa).

Positions 1–26 (MSMASSSSSSLLAMAVLAALFAGAWC) are cleaved as a signal peptide. Residues 41–120 (KHLAVLVKYE…KYTIGATYAP (80 aa)) enclose the Expansin-like CBD domain.

Belongs to the expansin family. Expansin B subfamily. As to expression, pollen specific.

Its subcellular location is the secreted. The chain is Pollen allergen Phl p 2 (PHLPII) from Phleum pratense (Common timothy).